We begin with the raw amino-acid sequence, 2620 residues long: MAHLNMFNHLIPLEMDMDGADEEKRQRVFSSFYHFGARLYDCLHTIAIEIEDDDCEHFPTKAISTVLKILNFEHFLSSDKCRFPPVSNLLDIIESRQMDDCQILFKISDLLEDHKSEKPERFGPYNPLDPKKVPIKNAVDALTSVSSMAYSFLATTFAEELMKAAIRDIYVFDEDSLEDNDETQLSDENGVFDSTPSNNEKKDSIINFRQLPSIDSQIVQQNAMLLLAARVGIEQFVEYSHEIGVMQFRGDKLSKITPLMEAAASSSETIVRRLLELGADPNVASIPNCNTALIYAASTDGRDVVREILMTEGPKKPDVYLINNHYHDAMMEVALVGGTDTLKEFLEMGYRPRFLNLRQQERDSALTLSAQKGHIKIVTAIMDYYEKNPPQTEEEKQELCLERYSALMEAAMEGHIDVCKLMLSRGTPADLCTEVTIEPSPLIVASAGGYPEVVEVLLAAGAKIEELSNKKNTPLMEACAGDQGDQAGVVKLLLSKHAEVDVSNPDTGDTPLSLAARNGYIAIMKMLIEKGGDLTAGKTSPIVEAARNGHLECIQFILAHCKTIPQDQLSRALVSAADFGSLLIVEEVIRAGADLNFEQDERTALMKAAKGDHFEVVQLLLSKGASVNFKSSKNDATALSLACSEGNMEIAEFLIRNGADPMLKMDDGVNCFMEVARHGSIDLMSLLVEFTKGNMPMDKDPPKLGITRCSSKNGKKRRKGMPSGQDMLSMFNGMYPKRKGSKQMGLHEMPFSTQEIDMLTHLLKMQQQMVAYETHKSTETETAEIKKVLRAIESVYGFTSEGKINFPPPPNRQDMDKLYNGELVPNIKLWAELVSHGWLEMERKIGRPIELSSFQQCNEGHSTNAAAAVSAVAAAATGMDSQTYLASVFAKMNNGEEMPRVPATVGSLNAASAAMTGISFHSDDAMRLFGGASFATKLLSDNKKPCNHQQYASIHHIQEGAFRAALIKMSSMFRERNGCAISVRDMESNFPIEHQEERFGPSKPIPSGPKKTSLTAPNPADTSDVTTKQPGAMKKDGLEAKKIYPGIIKLAAEMEKLFRANPTESNRDLALTTAYIASALPDHFCSELQLESGDRILKKLLSGLTEKQKNTVISRMRSVVNKESGSSLLRRSVDNLTDKRIKEDYLKLFRDSTDCAFYDKCVQEKNHLLKAIEIQKKGKTSSGTLISTSSKSLMAKSVQSQQQQGQLRRTHSEGDGAERAKSRSNAIDKATETTLETPLTIACANGHKDIVELLLKEGANIEHRDKKGFSPLIIAATAGHSSVVEVLLKNHAAIEAQSDRTKDTALSLACSGGRKDVVELLLAHGANKEHRNVSDYTPLSLASSGGYIEIVNMLLTAGSEINSRTGSKLGISPLMLASMNGHREATRVLLEKGSDINAQIETNRNTALTLASFQGRTEVVKLLLAYNANVEHRAKTGLTPLMECASGGYVDVGNLLIAAGADTNASPVQQTKDTALTISAEKGHEKFVRMLLNGDAAVDVRNKKGCTALWLACNGGYLSTAQALLEKGADPDMFDNRKISPMMAAFRKGHVEIVKYMVNSAKQFPNEQDLIRAQQTAETDDIKKKCGECIDIIRSAKKAQAESAELAAQKLLELIDEEKVQKEVKKQKQKDKKIKKKEEKKIKKQEAEPEPEPEPEPEPVPEPEPVVISEPVPEPVPIVVEEPPKEPPKPRRNRRKTNPDGVPKGPKVVVEPKASIAEEPSEMPYEPIVVTIPPPAKIHAPMVSPGSYSESEEWCKAGKEGKKVKSSKKSGYGAPSSAGSSQAKESSTTSSVISDQTPPYEIDTRNESSWKLTIPAYAASRVIGKGGSNVNAVREATGAIIEINKIQESNKQAERTVLAKGTPEMVRYAMNIINYMIYDADVLVTDAIRTVLRGNLSVASSFSSEGTSKSAVDSTYAPSSIPKSLSSASIARQSASPIPQQSSQRSAKSHHHQKDSGGGNVWHQRMAAREEKVEPLMETKRISQSPKQAPQIPSTQQQSKLQSRQDQASETLVRVAPAENFVAPVPASSIAAPSRPNQNVLDRVIAPSLRREPTTTPLIQPVHPVQSVQSVQHMQQQQLARPEQKLAQPCLPDPIGQRYSQPISRPQSSVQVSQSSFSKAPGTRPSTDFSRAPGPPQQQQTQNNMTTARNELFDEQLAFGQFKPTGMNSVATVIPAKPSVNNQNDDKNGNSDDFDFSKMRMFDEGKVGNIWGKSDEDSAWGGLFSQFLPQLGANSSLNNSNSKNDSSNEWGQNEFISQLLINSSLPNATSSPQGASTISSAPVQQPSTSSVTTGLSSLELKGWMPASFAPSARDPNRSQPPLFARSQSNSVANSTSTNIQQQQQQQIQHLQQQQALQQQQQRIQQFQQQYQQHQSQSSQQPSDLMSSKFSMLQSQQQQQQLYNQMQSLGQDGQGSNLYNHLAAQLLTHQESSTGAPGPTSSQLANSYYPSPSYTDASVLGQISMPSLSQRGIKQFDGFNNDSDGVIAAILEQQQQQKKQGLAQQSFMHNSQQPQPFGAPSNASANQSRLGMIQPRPQPPPFVAPQAPPGFSSLGNASSTTNPSRTSMQQMYQQYGQSSQQQPYGQMPQAMDWNRLGQQQQSASGQQNHQSSSSNKWSSNW.

12 ANK repeats span residues 254–283 (SKIT…DPNV), 288–318 (NCNT…KKPD), 361–390 (ERDS…KNPP), 402–431 (ERYS…PADL), 437–466 (IEPS…KIEE), 470–502 (KKNT…EVDV), 507–536 (TGDT…DLTA), 538–566 (KTSP…TIPQ), 568–597 (QLSR…DLNF), 600–629 (DERT…SVNF), 634–663 (NDAT…DPML), and 667–697 (DGVN…NMPM). Disordered regions lie at residues 699-726 (KDPP…SGQD), 994-1032 (HQEE…QPGA), and 1192-1229 (SLMA…AIDK). Residues 1012–1029 (TSLTAPNPADTSDVTTKQ) are compositionally biased toward polar residues. Residues 1192–1206 (SLMAKSVQSQQQQGQ) show a composition bias toward low complexity. Positions 1210 to 1221 (THSEGDGAERAK) are enriched in basic and acidic residues. 10 ANK repeats span residues 1234–1263 (TLET…NIEH), 1267–1296 (KGFS…AIEA), 1301–1330 (TKDT…NKEH), 1334–1363 (SDYT…EINS), 1369–1398 (LGIS…DINA), 1403–1432 (NRNT…NVEH), 1436–1465 (TGLT…DTNA), 1471–1500 (TKDT…AVDV), 1504–1533 (KGCT…DPDM), and 1537–1566 (RKIS…QFPN). Positions 1596-1648 (AKKAQAESAELAAQKLLELIDEEKVQKEVKKQKQKDKKIKKKEEKKIKKQEAE) form a coiled coil. Disordered regions lie at residues 1621-1720 (QKEV…AEEP) and 1759-1804 (KEGK…EIDT). The span at 1636–1647 (KKEEKKIKKQEA) shows a compositional bias: basic and acidic residues. Over residues 1648 to 1661 (EPEPEPEPEPEPVP) the composition is skewed to acidic residues. Composition is skewed to low complexity over residues 1665–1681 (PVVI…IVVE) and 1769–1791 (KSGY…TTSS). In terms of domain architecture, KH spans 1807 to 1873 (ESSWKLTIPA…EMVRYAMNII (67 aa)). A compositionally biased stretch (polar residues) spans 1899 to 1913 (ASSFSSEGTSKSAVD). 8 disordered regions span residues 1899 to 1962 (ASSF…GNVW), 1976 to 2010 (LMET…QASE), 2067 to 2143 (SVQS…QTQN), 2267 to 2294 (NATS…VTTG), 2307 to 2343 (SFAP…QQQQ), 2372 to 2391 (QHQS…KFSM), 2429 to 2448 (QESS…NSYY), and 2496 to 2620 (QKKQ…SSNW). Residues 1917-1946 (APSSIPKSLSSASIARQSASPIPQQSSQRS) show a composition bias toward low complexity. Positions 1982–1993 (ISQSPKQAPQIP) are enriched in polar residues. Composition is skewed to low complexity over residues 1994-2006 (STQQ…SRQD), 2067-2078 (SVQSVQHMQQQQ), and 2100-2118 (SQPI…SSFS). Composition is skewed to polar residues over residues 2267-2286 (NATS…VQQP) and 2325-2339 (RSQS…STNI). Over residues 2505–2528 (SFMHNSQQPQPFGAPSNASANQSR) the composition is skewed to polar residues. The segment covering 2535 to 2547 (RPQPPPFVAPQAP) has biased composition (pro residues). Over residues 2552–2565 (SLGNASSTTNPSRT) the composition is skewed to polar residues. Low complexity-rich tracts occupy residues 2566–2588 (SMQQ…QMPQ) and 2597–2620 (QQQQ…SSNW).

It belongs to the mask family.

The protein localises to the cytoplasm. In Caenorhabditis elegans, this protein is Ankyrin repeat and KH domain-containing protein mask-1.